We begin with the raw amino-acid sequence, 94 residues long: Large ribosomal subunit protein bL28A (94 aa).

Positions 63–94 (GHRGRRRAARAGSAPAHFARQAGSSLRTAAIL) are disordered. The segment covering 72-82 (RAGSAPAHFAR) has biased composition (low complexity). Positions 84–94 (AGSSLRTAAIL) are enriched in polar residues.

The protein belongs to the bacterial ribosomal protein bL28 family.

This is Large ribosomal subunit protein bL28A (rpmB1) from Mycobacterium bovis (strain ATCC BAA-935 / AF2122/97).